The sequence spans 346 residues: MAHRPRWTLSQVTELFEKPLLDLLFEAQQVHRQHFDPRQVQVSTLLSIKTGACPEDCKYCPQSSRYKTGLEAERLMEVEQVLESARKAKAAGSTRFCMGAAWKNPRERDMPYLEQMVQGVKAMGLEACMTLGTLSESQAQRLANAGLDYYNHNLDTSPEFYGNIITTRTYQERLDTLEKVREAGIKVCSGGIVGLGETVKDRAGLLLQLANLPTPPESVPINMLVKVKGTPLADNDDVDAFDFIRTIAVARIMMPTSYVRLSAGREQMNEQTQAMCFMAGANSIFYGCKLLTTPNPEEDKDLQLFRKLGLNPQQTAVLAGDNEQQQRLEQALMTPDTDEYYNAAAL.

In terms of domain architecture, Radical SAM core spans 38-256 (RQVQVSTLLS…IAVARIMMPT (219 aa)). Residues Cys53, Cys57, and Cys60 each coordinate [4Fe-4S] cluster. Residues Cys97, Cys128, Cys188, and Arg260 each coordinate [2Fe-2S] cluster.

The protein belongs to the radical SAM superfamily. Biotin synthase family. In terms of assembly, homodimer. [4Fe-4S] cluster is required as a cofactor. Requires [2Fe-2S] cluster as cofactor.

It carries out the reaction (4R,5S)-dethiobiotin + (sulfur carrier)-SH + 2 reduced [2Fe-2S]-[ferredoxin] + 2 S-adenosyl-L-methionine = (sulfur carrier)-H + biotin + 2 5'-deoxyadenosine + 2 L-methionine + 2 oxidized [2Fe-2S]-[ferredoxin]. It participates in cofactor biosynthesis; biotin biosynthesis; biotin from 7,8-diaminononanoate: step 2/2. Catalyzes the conversion of dethiobiotin (DTB) to biotin by the insertion of a sulfur atom into dethiobiotin via a radical-based mechanism. The polypeptide is Biotin synthase (Escherichia coli O6:K15:H31 (strain 536 / UPEC)).